Reading from the N-terminus, the 287-residue chain is BURP domain-containing protein 2 (287 aa).

The signal sequence occupies residues 1–21 (MARSLAALLLLLVAAAGASHA). Positions 67–287 (FFLEKDLFPG…PQDDMLWVRN (221 aa)) constitute a BURP domain.

Expressed in shoot.

The protein is BURP domain-containing protein 2 (BURP2) of Oryza sativa subsp. japonica (Rice).